The chain runs to 232 residues: BTB/POZ domain-containing protein KCTD11 (232 aa).

The 49-residue stretch at 1 to 49 folds into the BTB domain; sequence MLGAMFRAGTPMPPNLNSQGGGHYFIDRDGKAFRHILNFLRLGRLDLPR.

Homopentamer. Interacts with KCTD6 and KCTD21; KCTD11 and KCTD6 or KCTD21 may associate in pentameric assemblies. Component of the BCR(KCTD11) E3 ubiquitin ligase complex, at least composed of CUL3 and KCTD11 and RBX1. Interacts (via BTB domain) with CUL3; initially a 4:4 stoichiometry has been reported, however, electron microscopy revealed pentameric states of the BTB domain. As to expression, higher expression in cerebellum than in whole brain and lower expression in medulloblastoma.

The protein operates within protein modification; protein ubiquitination. Its function is as follows. Plays a role as a marker and a regulator of neuronal differentiation; Up-regulated by a variety of neurogenic signals, such as retinoic acid, epidermal growth factor/EGF and NGFB/nerve growth factor. Induces apoptosis, growth arrest and the expression of cyclin-dependent kinase inhibitor CDKN1B. Plays a role as a tumor repressor and inhibits cell growth and tumorigenicity of medulloblastoma (MDB). Acts as a probable substrate-specific adapter for a BCR (BTB-CUL3-RBX1) E3 ubiquitin-protein ligase complex towards HDAC1. Functions as antagonist of the Hedgehog pathway on cell proliferation and differentiation by affecting the nuclear transfer of transcription factor GLI1, thus maintaining cerebellar granule cells in undifferentiated state, this effect probably occurs via HDAC1 down-regulation, keeping GLI1 acetylated and inactive. When knock-down, Hedgehog antagonism is impaired and proliferation of granule cells is sustained. Activates the caspase cascade. The sequence is that of BTB/POZ domain-containing protein KCTD11 (KCTD11) from Homo sapiens (Human).